A 62-amino-acid polypeptide reads, in one-letter code: Large ribosomal subunit protein bL28 (62 aa).

The tract at residues 1–28 (MARVCTITGRKARSGNSRSHAMNATKRK) is disordered.

This sequence belongs to the bacterial ribosomal protein bL28 family.

The sequence is that of Large ribosomal subunit protein bL28 from Bacillus anthracis (strain CDC 684 / NRRL 3495).